Here is a 562-residue protein sequence, read N- to C-terminus: MTLLSYLSSLCREATLSAFPQVENPSPDITQSTKEHFGHYQCNDAMKLDRTLKMAPRAIAEAIVNNLPKDNFSSVEVAGAGFINFTFSKEFLKQRLETFSADLSSGFCVKDPKKIVIDFSSPNIAKDMHVGHLRSTIIGDCLARVFSFVGNDVLRLNHIGDWGTAFGMLITYLQEEASEDVGNLEDLTALYKKAHARFAEDVEFKKRSQANVVALQSGDPSALNLWKHICEISERAFQKIYDILGVAIEKRGESFYNPFLPEIIQDLENKKLITVSDNAKCVFHEGFSIPLMVQKSDGGYNYATTDLAAMRYRVEKDHADKIIIVTDMGQSLHFQLLEATALAAGYLRDKETFSHVGFGLVLDSEGKKFKTRSGENIKLKELLNTAVDQAVATLKEHRPEMSEEEISQRAPILGINAIKYADLSSHRVSDYVFSFEKMLRFEGNTAMFLLYAYVRIQGIKRRLNIEKLNLEAVVNIQEPAEEALALALLRFPEAIDVTLKELCPHFLTDYLYMLTNKFNAFFRDCHIEGSPYQQERLYLCALVEKTLATGMHLLGLQTLDRL.

The 'HIGH' region motif lies at 122 to 132 (PNIAKDMHVGH).

It belongs to the class-I aminoacyl-tRNA synthetase family. Monomer.

Its subcellular location is the cytoplasm. It catalyses the reaction tRNA(Arg) + L-arginine + ATP = L-arginyl-tRNA(Arg) + AMP + diphosphate. The polypeptide is Arginine--tRNA ligase (Chlamydia felis (strain Fe/C-56) (Chlamydophila felis)).